The chain runs to 177 residues: Parathyroid hormone-related protein (177 aa).

An N-terminal signal peptide occupies residues 1–24; sequence MLRRLVQQWSVLVFLLSYSVPSRG. The propeptide occupies 25–34; sequence RSVEGLGRRL. The important for receptor binding stretch occupies residues 57–68; that stretch reads RFFLHHLIAEIH. The disordered stretch occupies residues 74–177; the sequence is ATSEVSPNSK…TSLEPSSRTH (104 aa). Residues 76–90 show a composition bias toward polar residues; it reads SEVSPNSKPAPNTKN. Positions 108 to 129 match the Nuclear localization signal motif; sequence TNKVETYKEQPLKTPGKKKKGK. Over residues 109–118 the composition is skewed to basic and acidic residues; the sequence is NKVETYKEQP. Residues 122 to 132 show a composition bias toward basic residues; the sequence is PGKKKKGKPGK. Residues 161-177 show a composition bias toward low complexity; the sequence is PHTSPTSTSLEPSSRTH.

This sequence belongs to the parathyroid hormone family. In terms of assembly, PTHrP interacts with PTH1R (via N-terminal extracellular domain). In terms of processing, there are several secretory forms, including osteostatin, arising from endoproteolytic cleavage of the initial translation product. Each of these secretory forms is believed to have one or more of its own receptors that mediates the normal paracrine, autocrine and endocrine actions.

The protein resides in the secreted. Its subcellular location is the cytoplasm. The protein localises to the nucleus. In terms of biological role, neuroendocrine peptide which is a critical regulator of cellular and organ growth, development, migration, differentiation and survival and of epithelial calcium ion transport. Acts by binding to its receptor, PTH1R, activating G protein-coupled receptor signaling. Regulates endochondral bone development and epithelial-mesenchymal interactions during the formation of the mammary glands and teeth. Required for skeletal homeostasis. Promotes mammary mesenchyme differentiation and bud outgrowth by modulating mesenchymal cell responsiveness to BMPs. Up-regulates BMPR1A expression in the mammary mesenchyme and this increases the sensitivity of these cells to BMPs and allows them to respond to BMP4 in a paracrine and/or autocrine fashion. BMP4 signaling in the mesenchyme, in turn, triggers epithelial outgrowth and augments MSX2 expression, which causes the mammary mesenchyme to inhibit hair follicle formation within the nipple sheath. Its function is as follows. Potent inhibitor of osteoclastic bone resorption. This chain is Parathyroid hormone-related protein (Pthlh), found in Rattus norvegicus (Rat).